The sequence spans 434 residues: Histidine--tRNA ligase (434 aa).

It belongs to the class-II aminoacyl-tRNA synthetase family. As to quaternary structure, homodimer.

It localises to the cytoplasm. It carries out the reaction tRNA(His) + L-histidine + ATP = L-histidyl-tRNA(His) + AMP + diphosphate + H(+). In Chlorobium phaeobacteroides (strain BS1), this protein is Histidine--tRNA ligase.